Consider the following 500-residue polypeptide: L-arabinose isomerase (500 aa).

Residues E306, E333, H350, and H450 each coordinate Mn(2+).

This sequence belongs to the arabinose isomerase family. Homohexamer. It depends on Mn(2+) as a cofactor.

The catalysed reaction is beta-L-arabinopyranose = L-ribulose. The protein operates within carbohydrate degradation; L-arabinose degradation via L-ribulose; D-xylulose 5-phosphate from L-arabinose (bacterial route): step 1/3. Its function is as follows. Catalyzes the conversion of L-arabinose to L-ribulose. In Yersinia enterocolitica serotype O:8 / biotype 1B (strain NCTC 13174 / 8081), this protein is L-arabinose isomerase.